The primary structure comprises 267 residues: tRNA pseudouridine synthase A (267 aa).

Aspartate 51 acts as the Nucleophile in catalysis. Substrate is bound at residue tyrosine 109.

It belongs to the tRNA pseudouridine synthase TruA family.

The catalysed reaction is uridine(38/39/40) in tRNA = pseudouridine(38/39/40) in tRNA. Formation of pseudouridine at positions 38, 39 and 40 in the anticodon stem and loop of transfer RNAs. The polypeptide is tRNA pseudouridine synthase A (Methanothrix thermoacetophila (strain DSM 6194 / JCM 14653 / NBRC 101360 / PT) (Methanosaeta thermophila)).